The sequence spans 72 residues: Mitotic-spindle organizing protein 1 (72 aa).

The protein belongs to the MOZART1 family. In terms of assembly, part of the gamma-tubulin complex.

The protein localises to the cytoplasm. The protein resides in the cytoskeleton. It localises to the microtubule organizing center. It is found in the centrosome. Its subcellular location is the spindle. Required for gamma-tubulin complex recruitment to the centrosome. The protein is Mitotic-spindle organizing protein 1 (mzt1) of Xenopus tropicalis (Western clawed frog).